Here is a 1327-residue protein sequence, read N- to C-terminus: Putative ATP-dependent RNA helicase ucp12 (1327 aa).

Disordered regions lie at residues 1 to 58 (MGSK…KQLV) and 201 to 222 (QAAR…NEKV). The span at 18-41 (SKNKEKNIKGKKKNSLDPIEKNKQ) shows a compositional bias: basic and acidic residues. A compositionally biased stretch (polar residues) spans 42 to 58 (ETAGLQTTSRPTAKQLV). The region spanning 276-315 (EPDTSIVNDLISLGFRDIHAKEACQYCVSLEDALEWLIIH) is the UBA domain. The 100-residue stretch at 405 to 504 (DDVSALQSIL…NHLQENIEDF (100 aa)) folds into the RWD domain. The region spanning 587-756 (MDAIQHSQVV…FGNAGHLHIH (170 aa)) is the Helicase ATP-binding domain. An ATP-binding site is contributed by 600–607 (GETGSGKS). The short motif at 703-706 (DEVH) is the DEAH box element. Positions 797–968 (LISRLVSSID…QVCLNVVPLV (172 aa)) constitute a Helicase C-terminal domain.

This sequence belongs to the DEAD box helicase family. DEAH subfamily.

Its subcellular location is the cytoplasm. It catalyses the reaction ATP + H2O = ADP + phosphate + H(+). Probable ATP-binding RNA helicase. The polypeptide is Putative ATP-dependent RNA helicase ucp12 (ucp12) (Schizosaccharomyces pombe (strain 972 / ATCC 24843) (Fission yeast)).